We begin with the raw amino-acid sequence, 220 residues long: Fructose-6-phosphate aldolase 2 (220 aa).

Lys85 (schiff-base intermediate with substrate) is an active-site residue.

Belongs to the transaldolase family. Type 3A subfamily. Homodecamer.

Its subcellular location is the cytoplasm. The enzyme catalyses beta-D-fructose 6-phosphate = dihydroxyacetone + D-glyceraldehyde 3-phosphate. Catalyzes the reversible formation of fructose 6-phosphate from dihydroxyacetone and D-glyceraldehyde 3-phosphate via an aldolization reaction. The polypeptide is Fructose-6-phosphate aldolase 2 (fsaB) (Escherichia coli O6:H1 (strain CFT073 / ATCC 700928 / UPEC)).